The chain runs to 267 residues: MKLQKLKLHGFNNLTKSLSFCIYDICYANTEAERDGYIAYIDEQYNANRLTEILSETCSIIGANVLNIARQDYEPQGASVTILVSEEPIDPRDIDTSEHPGPLPNSVVAHLDKSHICVHTYPESHPEGGLCTFRADIEVSTCGVISPLKALNYLIHQLESDIVTIDYRVRGFTRDVNGVKHFIDHEINSIQNFMSEDMKSMYDMMDVNVYQENMFHTKMLLKEFDLKHYLFNTKPEDLSAQEHKRITDLLWKEMREIYYGRNIPAIG.

Catalysis depends on serine 114, which acts as the Schiff-base intermediate with substrate; via pyruvic acid. A Pyruvic acid (Ser); by autocatalysis modification is found at serine 114. The active-site Proton acceptor; for processing activity is histidine 119. Cysteine 142 (proton donor; for catalytic activity) is an active-site residue.

This sequence belongs to the prokaryotic AdoMetDC family. Type 2 subfamily. As to quaternary structure, heterooctamer of four alpha and four beta chains arranged as a tetramer of alpha/beta heterodimers. Pyruvate serves as cofactor. In terms of processing, is synthesized initially as an inactive proenzyme. Formation of the active enzyme involves a self-maturation process in which the active site pyruvoyl group is generated from an internal serine residue via an autocatalytic post-translational modification. Two non-identical subunits are generated from the proenzyme in this reaction, and the pyruvate is formed at the N-terminus of the alpha chain, which is derived from the carboxyl end of the proenzyme. The post-translation cleavage follows an unusual pathway, termed non-hydrolytic serinolysis, in which the side chain hydroxyl group of the serine supplies its oxygen atom to form the C-terminus of the beta chain, while the remainder of the serine residue undergoes an oxidative deamination to produce ammonia and the pyruvoyl group blocking the N-terminus of the alpha chain.

It catalyses the reaction S-adenosyl-L-methionine + H(+) = S-adenosyl 3-(methylsulfanyl)propylamine + CO2. The protein operates within amine and polyamine biosynthesis; S-adenosylmethioninamine biosynthesis; S-adenosylmethioninamine from S-adenosyl-L-methionine: step 1/1. Its function is as follows. Catalyzes the decarboxylation of S-adenosylmethionine to S-adenosylmethioninamine (dcAdoMet), the propylamine donor required for the synthesis of the polyamines spermine and spermidine from the diamine putrescine. The chain is S-adenosylmethionine decarboxylase proenzyme from Erwinia tasmaniensis (strain DSM 17950 / CFBP 7177 / CIP 109463 / NCPPB 4357 / Et1/99).